The following is a 293-amino-acid chain: Phosphatidylglycerol--prolipoprotein diacylglyceryl transferase (293 aa).

Helical transmembrane passes span 4-24 (ILAF…LFIF), 45-65 (FELR…YFVA), 81-101 (ELIF…YVLF), and 115-135 (IWEG…TGFL). Arg-165 is an a 1,2-diacyl-sn-glycero-3-phospho-(1'-sn-glycerol) binding site. 3 helical membrane-spanning segments follow: residues 204–224 (PTFL…SVYF), 231–249 (HGEV…RIVI), and 262–282 (IKAA…GFLI).

This sequence belongs to the Lgt family.

Its subcellular location is the cell inner membrane. The enzyme catalyses L-cysteinyl-[prolipoprotein] + a 1,2-diacyl-sn-glycero-3-phospho-(1'-sn-glycerol) = an S-1,2-diacyl-sn-glyceryl-L-cysteinyl-[prolipoprotein] + sn-glycerol 1-phosphate + H(+). It functions in the pathway protein modification; lipoprotein biosynthesis (diacylglyceryl transfer). Its function is as follows. Catalyzes the transfer of the diacylglyceryl group from phosphatidylglycerol to the sulfhydryl group of the N-terminal cysteine of a prolipoprotein, the first step in the formation of mature lipoproteins. In Thermotoga petrophila (strain ATCC BAA-488 / DSM 13995 / JCM 10881 / RKU-1), this protein is Phosphatidylglycerol--prolipoprotein diacylglyceryl transferase.